Consider the following 295-residue polypeptide: Phosphatidylglycerol--prolipoprotein diacylglyceryl transferase (295 aa).

The next 7 membrane-spanning stretches (helical) occupy residues 17-37 (IKVH…WLLG), 57-77 (LLFY…MLFY), 92-112 (VWDG…ACWW), 127-147 (FMAP…FIGA), 196-216 (QLYE…AVSA), 222-242 (YLVG…VEFV), and 255-275 (WLTR…VLLV). R140 is a binding site for a 1,2-diacyl-sn-glycero-3-phospho-(1'-sn-glycerol).

This sequence belongs to the Lgt family.

The protein resides in the cell inner membrane. The catalysed reaction is L-cysteinyl-[prolipoprotein] + a 1,2-diacyl-sn-glycero-3-phospho-(1'-sn-glycerol) = an S-1,2-diacyl-sn-glyceryl-L-cysteinyl-[prolipoprotein] + sn-glycerol 1-phosphate + H(+). Its pathway is protein modification; lipoprotein biosynthesis (diacylglyceryl transfer). Functionally, catalyzes the transfer of the diacylglyceryl group from phosphatidylglycerol to the sulfhydryl group of the N-terminal cysteine of a prolipoprotein, the first step in the formation of mature lipoproteins. The sequence is that of Phosphatidylglycerol--prolipoprotein diacylglyceryl transferase from Stenotrophomonas maltophilia (strain R551-3).